The following is a 246-amino-acid chain: Bis(5'-nucleosyl)-tetraphosphatase PrpE [asymmetrical] (246 aa).

It belongs to the PrpE family. Requires Ni(2+) as cofactor.

The catalysed reaction is P(1),P(4)-bis(5'-guanosyl) tetraphosphate + H2O = GMP + GTP + 2 H(+). Functionally, asymmetrically hydrolyzes Ap4p to yield AMP and ATP. This chain is Bis(5'-nucleosyl)-tetraphosphatase PrpE [asymmetrical], found in Bacillus anthracis (strain A0248).